A 568-amino-acid chain; its full sequence is 2-succinyl-5-enolpyruvyl-6-hydroxy-3-cyclohexene-1-carboxylate synthase (568 aa).

It belongs to the TPP enzyme family. MenD subfamily. As to quaternary structure, homodimer. The cofactor is Mg(2+). Mn(2+) is required as a cofactor. It depends on thiamine diphosphate as a cofactor.

It catalyses the reaction isochorismate + 2-oxoglutarate + H(+) = 5-enolpyruvoyl-6-hydroxy-2-succinyl-cyclohex-3-ene-1-carboxylate + CO2. It participates in quinol/quinone metabolism; 1,4-dihydroxy-2-naphthoate biosynthesis; 1,4-dihydroxy-2-naphthoate from chorismate: step 2/7. It functions in the pathway quinol/quinone metabolism; menaquinone biosynthesis. In terms of biological role, catalyzes the thiamine diphosphate-dependent decarboxylation of 2-oxoglutarate and the subsequent addition of the resulting succinic semialdehyde-thiamine pyrophosphate anion to isochorismate to yield 2-succinyl-5-enolpyruvyl-6-hydroxy-3-cyclohexene-1-carboxylate (SEPHCHC). This is 2-succinyl-5-enolpyruvyl-6-hydroxy-3-cyclohexene-1-carboxylate synthase from Actinobacillus pleuropneumoniae serotype 3 (strain JL03).